Consider the following 80-residue polypeptide: Small ribosomal subunit protein bS16 (80 aa).

The protein belongs to the bacterial ribosomal protein bS16 family.

The polypeptide is Small ribosomal subunit protein bS16 (Wigglesworthia glossinidia brevipalpis).